The sequence spans 249 residues: Proteasome subunit alpha type-3 (249 aa).

This sequence belongs to the peptidase T1A family. As to quaternary structure, the 26S proteasome consists of a 20S proteasome core and two 19S regulatory subunits. The 20S proteasome core is composed of 28 subunits that are arranged in four stacked rings, resulting in a barrel-shaped structure. The two end rings are each formed by seven alpha subunits, and the two central rings are each formed by seven beta subunits. The catalytic chamber with the active sites is on the inside of the barrel.

Its subcellular location is the cytoplasm. It is found in the nucleus. Functionally, the proteasome is a multicatalytic proteinase complex which is characterized by its ability to cleave peptides with Arg, Phe, Tyr, Leu, and Glu adjacent to the leaving group at neutral or slightly basic pH. The proteasome has an ATP-dependent proteolytic activity. The protein is Proteasome subunit alpha type-3 (PAG1) of Oryza sativa subsp. japonica (Rice).